The primary structure comprises 422 residues: Enolase (422 aa).

Q161 is a (2R)-2-phosphoglycerate binding site. E203 acts as the Proton donor in catalysis. 3 residues coordinate Mg(2+): D240, E283, and D310. (2R)-2-phosphoglycerate is bound by residues K335, R364, S365, and K386. K335 (proton acceptor) is an active-site residue.

It belongs to the enolase family. The cofactor is Mg(2+).

The protein localises to the cytoplasm. The protein resides in the secreted. It is found in the cell surface. The enzyme catalyses (2R)-2-phosphoglycerate = phosphoenolpyruvate + H2O. It functions in the pathway carbohydrate degradation; glycolysis; pyruvate from D-glyceraldehyde 3-phosphate: step 4/5. Catalyzes the reversible conversion of 2-phosphoglycerate (2-PG) into phosphoenolpyruvate (PEP). It is essential for the degradation of carbohydrates via glycolysis. The chain is Enolase from Deinococcus deserti (strain DSM 17065 / CIP 109153 / LMG 22923 / VCD115).